Here is a 767-residue protein sequence, read N- to C-terminus: Receptor-type tyrosine-protein phosphatase-like ida-1 (767 aa).

An N-terminal signal peptide occupies residues 1-19 (MRFFHSIIVLLFSISTGSA). Residues 20 to 398 (FLLYGCNLSE…SLPVESSERD (379 aa)) are Lumenal-facing. Asn26 and Asn146 each carry an N-linked (GlcNAc...) asparagine glycan. A helical transmembrane segment spans residues 399–419 (WLLMPVLFVCAFTVTALGLVA). Over 420–767 (AVQIARSRRH…NHLLKSIATK (348 aa)) the chain is Cytoplasmic. The Tyrosine-protein phosphatase domain occupies 527–756 (SQNRTILPFD…KLVYGCVAQE (230 aa)).

It belongs to the protein-tyrosine phosphatase family. Receptor class 8 subfamily. In terms of processing, proteolytically cleaved probably at a dibasic consensus sequence by egl-3. In hermaphrodites specifically expressed in neurons and in particular in the head nerve ring (ADE, ALA, ASI, ASK, AUA, ASG, AVH and AVJ neurons), in the ventral nerve cord, pre-anal ganglia (PVP neuron), in the tail (PHA, PHB and PHC neurons) and in vulval motor neurons VC and HSN and the vulval uv1 cells. In males, also expressed in neurons anterior to the nerve ring and male-specific neurons in the tail.

It is found in the cytoplasmic vesicle membrane. It localises to the perikaryon. Its subcellular location is the cell projection. The protein resides in the axon. The protein localises to the dendrite. In terms of biological role, regulates dense-core vesicle (DCV) trafficking and/or secretion. Probably by controlling DCV trafficking, plays a role in the AVG neuron-mediated formation of the right axon tract of the ventral nerve cord. Involved in locomotion by regulating acetylcholine release. Probably by controlling the secretion of FLP neuropeptides, regulates the turning step of male mating behavior. Plays a role in preventing dauer formation. This chain is Receptor-type tyrosine-protein phosphatase-like ida-1, found in Caenorhabditis elegans.